The sequence spans 956 residues: MSSGLWSQEKVTSPYWEERIFYLLLQECSVTDKQTQKLLKVPKGSIGQYIQDRSVGHSRIPSAKGKKNQIGLKILEQPHAVLFVDEKDVVEINEKFTELLLAITNCEERFSLFKNRNRLSKGLQIDVGCPVKVQLRSGEEKFPGVVRFRGPLLAERTVSGIFFGVELLEEGRGQGFTDGVYQGKQLFQCDEDCGVFVALDKLELIEDDDTALESDYAGPGDTMQVELPPLEINSRVSLKVGETIESGTVIFCDVLPGKESLGYFVGVDMDNPIGNWDGRFDGVQLCSFACVESTILLHINDIIPALSESVTQERRPPKLAFMSRGVGDKGSSSHNKPKATGSTSDPGNRNRSELFYTLNGSSVDSQPQSKSKNTWYIDEVAEDPAKSLTEISTDFDRSSPPLQPPPVNSLTTENRFHSLPFSLTKMPNTNGSIGHSPLSLSAQSVMEELNTAPVQESPPLAMPPGNSHGLEVGSLAEVKENPPFYGVIRWIGQPPGLNEVLAGLELEDECAGCTDGTFRGTRYFTCALKKALFVKLKSCRPDSRFASLQPVSNQIERCNSLAFGGYLSEVVEENTPPKMEKEGLEIMIGKKKGIQGHYNSCYLDSTLFCLFAFSSVLDTVLLRPKEKNDVEYYSETQELLRTEIVNPLRIYGYVCATKIMKLRKILEKVEAASGFTSEEKDPEEFLNILFHHILRVEPLLKIRSAGQKVQDCYFYQIFMEKNEKVGVPTIQQLLEWSFINSNLKFAEAPSCLIIQMPRFGKDFKLFKKIFPSLELNITDLLEDTPRQCRICGGLAMYECRECYDDPDISAGKIKQFCKTCNTQVHLHPKRLNHKYNPVSLPKDLPDWDWRHGCIPCQNMELFAVLCIETSHYVAFVKYGKDDSAWLFFDSMADRDGGQNGFNIPQVTPCPEVGEYLKMSLEDLHSLDSRRIQGCARRLLCDAYMCMYQSPTMSLYK.

The interval 106–593 (CEERFSLFKN…LEIMIGKKKG (488 aa)) is interaction with TRIP. 2 CAP-Gly domains span residues 153–198 (LAER…VFVA) and 253–286 (DVLP…VQLC). The disordered stretch occupies residues 309–353 (SVTQERRPPKLAFMSRGVGDKGSSSHNKPKATGSTSDPGNRNRSE). Residues 330-349 (GSSSHNKPKATGSTSDPGNR) are compositionally biased toward polar residues. The residue at position 387 (S387) is a Phosphoserine. The disordered stretch occupies residues 392 to 411 (STDFDRSSPPLQPPPVNSLT). The interaction with TRAF2 stretch occupies residues 394-469 (DFDRSSPPLQ…LAMPPGNSHG (76 aa)). A phosphoserine mark is found at S418 and S422. Residues 470-554 (LEVGSLAEVK…FASLQPVSNQ (85 aa)) form an interaction with IKBKG/NEMO region. The region spanning 492–535 (GQPPGLNEVLAGLELEDECAGCTDGTFRGTRYFTCALKKALFVK) is the CAP-Gly 3 domain. The USP domain occupies 592–950 (KGIQGHYNSC…DAYMCMYQSP (359 aa)). The Nucleophile role is filled by C601. Residues 781–833 (LEDTPRQCRICGGLAMYECRECYDDPDISAGKIKQFCKTCNTQVHLHPKRLNH) are B-box. 8 residues coordinate Zn(2+): C788, C791, C799, C802, C817, C820, H825, and H833. H871 acts as the Proton acceptor in catalysis.

It belongs to the peptidase C19 family. Interacts (via CAP-Gly domain) with IKBKG/NEMO (via proline-rich C-terminal region). Interacts with TRAF2 and TRIP. Interacts with PLK1, DVL1, DVL3, MAVS, TBK1, IKKE and RIGI. Interacts (via CAP-Gly domain) with microtubules. Interacts with HDAC6 and BCL3. Interacts with MAP3K7. Identified in a complex with TRAF6 and SQSTM1. Interacts with OPTN and SQSTM1. Interacts with CEP350. Interacts with RNF31; the interaction is indirect and is mediated via SPATA2. Interacts with SPATA2 (via the PUB domain); the interaction is direct and recruits CYLD to the LUBAC complex, thereby regulating TNF-alpha-induced necroptosis. Post-translationally, ubiquitinated. Polyubiquitinated in hepatocytes treated with palmitic acid. Ubiquitination is mediated by E3 ligase TRIM47 and leads to proteasomal degradation. Phosphorylated on several serine residues by IKKA and/or IKKB in response to immune stimuli. Phosphorylation requires IKBKG. Phosphorylation abolishes TRAF2 deubiquitination, interferes with the activation of Jun kinases, and strongly reduces CD40-dependent gene activation by NF-kappa-B. As to expression, detected in fetal brain, testis, and skeletal muscle, and at a lower level in adult brain, leukocytes, liver, heart, kidney, spleen, ovary and lung. Isoform 2 is found in all tissues except kidney.

It localises to the cytoplasm. The protein localises to the perinuclear region. The protein resides in the cytoskeleton. It is found in the cell membrane. Its subcellular location is the microtubule organizing center. It localises to the centrosome. The protein localises to the spindle. The protein resides in the cilium basal body. The enzyme catalyses Thiol-dependent hydrolysis of ester, thioester, amide, peptide and isopeptide bonds formed by the C-terminal Gly of ubiquitin (a 76-residue protein attached to proteins as an intracellular targeting signal).. Its activity is regulated as follows. Inhibited by phosphorylation at serine residues. In terms of biological role, deubiquitinase that specifically cleaves 'Lys-63'- and linear 'Met-1'-linked polyubiquitin chains and is involved in NF-kappa-B activation and TNF-alpha-induced necroptosis. Negatively regulates NF-kappa-B activation by deubiquitinating upstream signaling factors. Contributes to the regulation of cell survival, proliferation and differentiation via its effects on NF-kappa-B activation. Negative regulator of Wnt signaling. Inhibits HDAC6 and thereby promotes acetylation of alpha-tubulin and stabilization of microtubules. Plays a role in the regulation of microtubule dynamics, and thereby contributes to the regulation of cell proliferation, cell polarization, cell migration, and angiogenesis. Required for normal cell cycle progress and normal cytokinesis. Inhibits nuclear translocation of NF-kappa-B. Plays a role in the regulation of inflammation and the innate immune response, via its effects on NF-kappa-B activation. Dispensable for the maturation of intrathymic natural killer cells, but required for the continued survival of immature natural killer cells. Negatively regulates TNFRSF11A signaling and osteoclastogenesis. Involved in the regulation of ciliogenesis, allowing ciliary basal bodies to migrate and dock to the plasma membrane; this process does not depend on NF-kappa-B activation. Ability to remove linear ('Met-1'-linked) polyubiquitin chains regulates innate immunity and TNF-alpha-induced necroptosis: recruited to the LUBAC complex via interaction with SPATA2 and restricts linear polyubiquitin formation on target proteins. Regulates innate immunity by restricting linear polyubiquitin formation on RIPK2 in response to NOD2 stimulation. Involved in TNF-alpha-induced necroptosis by removing linear ('Met-1'-linked) polyubiquitin chains from RIPK1, thereby regulating the kinase activity of RIPK1. Negatively regulates intestinal inflammation by removing 'Lys-63' linked polyubiquitin chain of NLRP6, thereby reducing the interaction between NLRP6 and PYCARD/ASC and formation of the NLRP6 inflammasome. Does not catalyze deubiquitination of heterotypic 'Lys-63'-/'Lys-48'-linked branched ubiquitin chains. Removes 'Lys-63' linked polyubiquitin chain of MAP3K7, which inhibits phosphorylation and blocks downstream activation of the JNK-p38 kinase cascades. Also removes 'Lys-63'-linked polyubiquitin chains of MAP3K1 and MA3P3K3, which inhibit their interaction with MAP2K1 and MAP2K2. The chain is Ubiquitin carboxyl-terminal hydrolase CYLD from Homo sapiens (Human).